The sequence spans 96 residues: Probable Fe(2+)-trafficking protein (96 aa).

Positions 21–40 are disordered; it reads LPKMPHPPFPNKKGQELQET.

It belongs to the Fe(2+)-trafficking protein family.

Functionally, could be a mediator in iron transactions between iron acquisition and iron-requiring processes, such as synthesis and/or repair of Fe-S clusters in biosynthetic enzymes. In Psychrobacter arcticus (strain DSM 17307 / VKM B-2377 / 273-4), this protein is Probable Fe(2+)-trafficking protein.